Reading from the N-terminus, the 176-residue chain is NAD(P)H-quinone oxidoreductase subunit I, chloroplastic (176 aa).

2 4Fe-4S ferredoxin-type domains span residues 55–84 and 95–124; these read GRIH…VNWE and QTYS…MTEE. The [4Fe-4S] cluster site is built by C64, C67, C70, C74, C104, C107, C110, and C114.

Belongs to the complex I 23 kDa subunit family. NDH is composed of at least 16 different subunits, 5 of which are encoded in the nucleus. Requires [4Fe-4S] cluster as cofactor.

It localises to the plastid. Its subcellular location is the chloroplast thylakoid membrane. It carries out the reaction a plastoquinone + NADH + (n+1) H(+)(in) = a plastoquinol + NAD(+) + n H(+)(out). It catalyses the reaction a plastoquinone + NADPH + (n+1) H(+)(in) = a plastoquinol + NADP(+) + n H(+)(out). Its function is as follows. NDH shuttles electrons from NAD(P)H:plastoquinone, via FMN and iron-sulfur (Fe-S) centers, to quinones in the photosynthetic chain and possibly in a chloroplast respiratory chain. The immediate electron acceptor for the enzyme in this species is believed to be plastoquinone. Couples the redox reaction to proton translocation, and thus conserves the redox energy in a proton gradient. The sequence is that of NAD(P)H-quinone oxidoreductase subunit I, chloroplastic from Mesostigma viride (Green alga).